The primary structure comprises 103 residues: Cell division topological specificity factor (103 aa).

The protein belongs to the MinE family.

Prevents the cell division inhibition by proteins MinC and MinD at internal division sites while permitting inhibition at polar sites. This ensures cell division at the proper site by restricting the formation of a division septum at the midpoint of the long axis of the cell. The protein is Cell division topological specificity factor of Prochlorococcus marinus (strain MIT 9211).